A 254-amino-acid polypeptide reads, in one-letter code: tRNA pseudouridine synthase A (254 aa).

Aspartate 52 acts as the Nucleophile in catalysis. Residue tyrosine 111 coordinates substrate.

This sequence belongs to the tRNA pseudouridine synthase TruA family. As to quaternary structure, homodimer.

It carries out the reaction uridine(38/39/40) in tRNA = pseudouridine(38/39/40) in tRNA. Functionally, formation of pseudouridine at positions 38, 39 and 40 in the anticodon stem and loop of transfer RNAs. This is tRNA pseudouridine synthase A from Rhizorhabdus wittichii (strain DSM 6014 / CCUG 31198 / JCM 15750 / NBRC 105917 / EY 4224 / RW1) (Sphingomonas wittichii).